The following is a 106-amino-acid chain: UPF0145 protein (106 aa).

It belongs to the UPF0145 family.

This Listeria grayi (Listeria murrayi) protein is UPF0145 protein.